A 448-amino-acid polypeptide reads, in one-letter code: DNA repair protein RadA (448 aa).

The C4-type zinc-finger motif lies at 10 to 27 (CQHCGFTSPKWLGKCVQC). An ATP-binding site is contributed by 96–103 (GSPGVGKS). The short motif at 253 to 257 (KNRFG) is the RadA KNRFG motif element. Residues 351–448 (DVFINVSGGI…NAVGKIVEWM (98 aa)) are lon-protease-like.

Belongs to the RecA family. RadA subfamily.

Its function is as follows. DNA-dependent ATPase involved in processing of recombination intermediates, plays a role in repairing DNA breaks. Stimulates the branch migration of RecA-mediated strand transfer reactions, allowing the 3' invading strand to extend heteroduplex DNA faster. Binds ssDNA in the presence of ADP but not other nucleotides, has ATPase activity that is stimulated by ssDNA and various branched DNA structures, but inhibited by SSB. Does not have RecA's homology-searching function. The protein is DNA repair protein RadA of Helicobacter pylori (strain ATCC 700392 / 26695) (Campylobacter pylori).